We begin with the raw amino-acid sequence, 274 residues long: Large ribosomal subunit protein uL2cz/uL2cy (274 aa).

Residues 225–274 form a disordered region; it reads PVDHPHGGGEGRAPIGRKKPVTPWGYPALGRRTRKRKKYSETLILRRRSK.

Belongs to the universal ribosomal protein uL2 family. Part of the 50S ribosomal subunit.

The protein localises to the plastid. The protein resides in the chloroplast. The sequence is that of Large ribosomal subunit protein uL2cz/uL2cy (rpl2-A) from Crucihimalaya wallichii (Rock-cress).